We begin with the raw amino-acid sequence, 202 residues long: LexA repressor (202 aa).

The segment at residues 28 to 48 (RAEIAQRLGFRSPNAAEEHLK) is a DNA-binding region (H-T-H motif). Residues Ser119 and Lys156 each act as for autocatalytic cleavage activity in the active site.

Belongs to the peptidase S24 family. In terms of assembly, homodimer.

It carries out the reaction Hydrolysis of Ala-|-Gly bond in repressor LexA.. Its function is as follows. Represses a number of genes involved in the response to DNA damage (SOS response), including recA and lexA. Binds to the 16 bp palindromic sequence 5'-CTGTATATATATACAG-3'. In the presence of single-stranded DNA, RecA interacts with LexA causing an autocatalytic cleavage which disrupts the DNA-binding part of LexA, leading to derepression of the SOS regulon and eventually DNA repair. This Yersinia pseudotuberculosis serotype O:1b (strain IP 31758) protein is LexA repressor.